The primary structure comprises 211 residues: Prolactin-1 (211 aa).

An N-terminal signal peptide occupies residues 1–23 (MARRSQGTKLHLAVLCLVVSCHA). 2 disulfide bridges follow: Cys-69–Cys-184 and Cys-201–Cys-211.

Belongs to the somatotropin/prolactin family.

The protein localises to the secreted. This is Prolactin-1 (prl1) from Oncorhynchus keta (Chum salmon).